We begin with the raw amino-acid sequence, 274 residues long: Large ribosomal subunit protein uL2cz/uL2cy (274 aa).

Disordered regions lie at residues 1 to 21 and 225 to 274; these read MAIH…VDSQ and PVDH…RRSK.

This sequence belongs to the universal ribosomal protein uL2 family. Part of the 50S ribosomal subunit.

The protein localises to the plastid. It localises to the chloroplast. In Arabidopsis thaliana (Mouse-ear cress), this protein is Large ribosomal subunit protein uL2cz/uL2cy (rpl2-A).